We begin with the raw amino-acid sequence, 1390 residues long: Hepatocyte growth factor receptor (1390 aa).

The N-terminal stretch at 1-24 (MKAPAVLAPGILVLLFTLVQRSNG) is a signal peptide. The Extracellular segment spans residues 25-932 (ECKEALAKSE…VIVQPDQNFT (908 aa)). Positions 27-515 (KEALAKSEMN…TGKKITKIPL (489 aa)) constitute a Sema domain. A glycan (N-linked (GlcNAc...) asparagine) is linked at N45. Cystine bridges form between C95–C101, C98–C160, C133–C141, and C172–C175. N106 carries an N-linked (GlcNAc...) asparagine glycan. A glycan (N-linked (GlcNAc...) asparagine) is linked at N149. A glycan (N-linked (GlcNAc...) asparagine) is linked at N202. Cystine bridges form between C298/C363 and C385/C397. Residues N399 and N405 are each glycosylated (N-linked (GlcNAc...) asparagine). 4 cysteine pairs are disulfide-bonded: C520-C538, C526-C561, C529-C545, and C541-C551. IPT/TIG domains lie at 563–655 (PAIY…FSYV), 657–739 (PVIT…FSYR), and 742–836 (PIVY…LIYV). T582 is a glycosylation site (O-linked (Man) threonine). 2 N-linked (GlcNAc...) asparagine glycosylation sites follow: N607 and N635. T676 and T761 each carry an O-linked (Man) threonine glycan. Residues N785, N879, and N930 are each glycosylated (N-linked (GlcNAc...) asparagine). The helical transmembrane segment at 933–955 (GLIAGVVSISIALLLLLGFFLWL) threads the bilayer. Residues 956–1390 (KKRKQIKDLG…TRPASFWETS (435 aa)) are Cytoplasmic-facing. S966 carries the post-translational modification Phosphoserine. T977 is subject to Phosphothreonine. 3 positions are modified to phosphoserine: S990, S997, and S1000. The residue at position 1003 (Y1003) is a Phosphotyrosine. Positions 1078 to 1345 (VHFNEVIGRG…RISAIFSTFI (268 aa)) constitute a Protein kinase domain. ATP-binding positions include 1084 to 1092 (IGRGHFGCV) and K1110. Catalysis depends on D1204, which acts as the Proton acceptor. An interaction with RANBP9 region spans residues 1212–1390 (LDEKFTVKVA…TRPASFWETS (179 aa)). Y1230 carries the phosphotyrosine modification. Residues Y1234 and Y1235 each carry the phosphotyrosine; by autocatalysis modification. Residue T1289 is modified to Phosphothreonine. The interval 1320-1359 (WHPKAEMRPSFSELVSRISAIFSTFIGEHYVHVNATYVNV) is interaction with MUC20. A phosphotyrosine; by autocatalysis mark is found at Y1349 and Y1356. Y1365 carries the phosphotyrosine modification.

The protein belongs to the protein kinase superfamily. Tyr protein kinase family. Heterodimer made of an alpha chain (50 kDa) and a beta chain (145 kDa) which are disulfide linked. Binds PLXNB1. Interacts when phosphorylated with downstream effectors including STAT3, PIK3R1, SRC, PCLG1, GRB2 and GAB1. Interacts with SPSB1, SPSB2 and SPSB4. Interacts with INPP5D/SHIP1. When phosphorylated at Tyr-1356, interacts with INPPL1/SHIP2. Interacts with RANBP9 and RANBP10, as well as SPSB1, SPSB2, SPSB3 and SPSB4. SPSB1 binding occurs in the presence and in the absence of HGF, however HGF treatment has a positive effect on this interaction. Interacts with MUC20; prevents interaction with GRB2 and suppresses hepatocyte growth factor-induced cell proliferation. Interacts with GRB10. Interacts with PTPN1 and PTPN2. Interacts with HSP90AA1 and HSP90AB1; the interaction suppresses MET kinase activity. Interacts with tensin TNS3. Interacts (when phosphorylated) with tensin TNS4 (via SH2 domain); the interaction increases MET protein stability by inhibiting MET endocytosis and subsequent lysosomal degradation. Post-translationally, autophosphorylated in response to ligand binding on Tyr-1234 and Tyr-1235 in the kinase domain leading to further phosphorylation of Tyr-1349 and Tyr-1356 in the C-terminal multifunctional docking site. Dephosphorylated by PTPRJ at Tyr-1349 and Tyr-1365. Dephosphorylated by PTPN1 and PTPN2. Ubiquitinated. Ubiquitination by CBL regulates the receptor stability and activity through proteasomal degradation. In terms of processing, O-mannosylation of IPT/TIG domains by TMEM260 is required for protein maturation. O-mannosylated residues are composed of single mannose glycans that are not elongated or modified.

Its subcellular location is the membrane. It catalyses the reaction L-tyrosyl-[protein] + ATP = O-phospho-L-tyrosyl-[protein] + ADP + H(+). With respect to regulation, in its inactive state, the C-terminal tail interacts with the catalytic domain and inhibits the kinase activity. Upon ligand binding, the C-terminal tail is displaced and becomes phosphorylated, thus increasing the kinase activity. Receptor tyrosine kinase that transduces signals from the extracellular matrix into the cytoplasm by binding to hepatocyte growth factor/HGF ligand. Regulates many physiological processes including proliferation, scattering, morphogenesis and survival. Ligand binding at the cell surface induces autophosphorylation of MET on its intracellular domain that provides docking sites for downstream signaling molecules. Following activation by ligand, interacts with the PI3-kinase subunit PIK3R1, PLCG1, SRC, GRB2, STAT3 or the adapter GAB1. Recruitment of these downstream effectors by MET leads to the activation of several signaling cascades including the RAS-ERK, PI3 kinase-AKT, or PLCgamma-PKC. The RAS-ERK activation is associated with the morphogenetic effects while PI3K/AKT coordinates prosurvival effects. During embryonic development, MET signaling plays a role in gastrulation, development and migration of muscles and neuronal precursors, angiogenesis and kidney formation. In adults, participates in wound healing as well as organ regeneration and tissue remodeling. Also promotes differentiation and proliferation of hematopoietic cells. The protein is Hepatocyte growth factor receptor (MET) of Pan troglodytes (Chimpanzee).